The following is a 612-amino-acid chain: Putative zinc metalloproteinase C607.06c (612 aa).

His-303 serves as a coordination point for Zn(2+). Residue Glu-304 is part of the active site. Zn(2+) contacts are provided by His-307 and His-313. The Jacalin-type lectin domain maps to 477–612 (VYRSERYGLR…FMDSIGFFIK (136 aa)).

The protein belongs to the peptidase M10B family. Requires Zn(2+) as cofactor.

The protein is Putative zinc metalloproteinase C607.06c of Schizosaccharomyces pombe (strain 972 / ATCC 24843) (Fission yeast).